Consider the following 324-residue polypeptide: Probable UDP-sugar transporter protein SLC35A4 (324 aa).

At 1–18 (MSVEDGGMPGLARPKQAR) the chain is on the cytoplasmic side. The chain crosses the membrane as a helical span at residues 19 to 39 (WTLMLFLSTAMYGAHAPFLAL). Residues 40–52 (CHVDGRVPFRPSS) lie on the Lumenal side of the membrane. Residues 53-73 (AVLLTELTKLLLCAFSLLVGW) traverse the membrane as a helical segment. At 74-85 (QTWPQGTPPWRQ) the chain is on the cytoplasmic side. Residues 86-106 (AAPFALSALLYGANNNLVIYL) traverse the membrane as a helical segment. The Lumenal segment spans residues 107 to 142 (QRYMDPSTYQVLSNLKIGSTALLYCLCLGHRLSARQ). The helical transmembrane segment at 143–163 (GLALLLLMAAGACYASGGFQE) threads the bilayer. At 164 to 180 (PGNTLPGPRSAAGARPM) the chain is on the cytoplasmic side. A helical membrane pass occupies residues 181-201 (PLHITPLGLLLLILYCLISGL). The Lumenal portion of the chain corresponds to 202-214 (SSVYTELIMKRQR). A helical membrane pass occupies residues 215-235 (LPLALQNLFLYTFGVILNLGL). Topologically, residues 236 to 248 (YAGSGPGPGFLEG) are cytoplasmic. A helical transmembrane segment spans residues 249 to 271 (FSGWAVLVVLNQAVNGLLMSAVM). Residues 272 to 279 (KHGSSITR) are Lumenal-facing. A helical transmembrane segment spans residues 280–300 (LFIVSCSLVVNAVLSAVLLQL). Topologically, residues 301-324 (QLTATFFLAALLIGLAVCLYYGSP) are cytoplasmic.

It belongs to the nucleotide-sugar transporter family. SLC35A subfamily. As to quaternary structure, found in a complex with SLC35A2 and SLC35A3. As to expression, expressed in the kidney, lung, testis, and prostate. Expressed in the brain by sets of neurons, such as the pyramidal cells of the cortex, the Purkinje cells of the cerebellum, and the motoneurons of the brainstem.

The protein resides in the golgi apparatus membrane. It catalyses the reaction CDP-L-ribitol(in) + CDP(out) = CDP-L-ribitol(out) + CDP(in). Mediates the transport of CDP-ribitol. Does not exhibit CMP-sialic acid, UDP-galactose and UDP-N-acetylglucosamine transport activity. The polypeptide is Probable UDP-sugar transporter protein SLC35A4 (Rattus norvegicus (Rat)).